The chain runs to 479 residues: Sulfate adenylyltransferase subunit 1 (479 aa).

Residues 25 to 239 (KSLLRFLTCG…EVLETVDIQR (215 aa)) enclose the tr-type G domain. The interval 34-41 (GSVDDGKS) is G1. 34–41 (GSVDDGKS) lines the GTP pocket. Positions 92–96 (GITID) are G2. The segment at 113-116 (DTPG) is G3. Residues 113 to 117 (DTPGH) and 168 to 171 (NKMD) each bind GTP. The segment at 168–171 (NKMD) is G4. Residues 206-208 (SAL) form a G5 region.

Belongs to the TRAFAC class translation factor GTPase superfamily. Classic translation factor GTPase family. CysN/NodQ subfamily. Heterodimer composed of CysD, the smaller subunit, and CysN.

The catalysed reaction is sulfate + ATP + H(+) = adenosine 5'-phosphosulfate + diphosphate. Its pathway is sulfur metabolism; hydrogen sulfide biosynthesis; sulfite from sulfate: step 1/3. With CysD forms the ATP sulfurylase (ATPS) that catalyzes the adenylation of sulfate producing adenosine 5'-phosphosulfate (APS) and diphosphate, the first enzymatic step in sulfur assimilation pathway. APS synthesis involves the formation of a high-energy phosphoric-sulfuric acid anhydride bond driven by GTP hydrolysis by CysN coupled to ATP hydrolysis by CysD. The chain is Sulfate adenylyltransferase subunit 1 from Salmonella agona (strain SL483).